The following is a 61-amino-acid chain: Sperm protamine P1 (61 aa).

The segment at 1–61 (MARYRHSRSR…RRYSRRRRRY (61 aa)) is disordered.

This sequence belongs to the protamine P1 family. Testis.

The protein localises to the nucleus. The protein resides in the chromosome. Protamines substitute for histones in the chromatin of sperm during the haploid phase of spermatogenesis. They compact sperm DNA into a highly condensed, stable and inactive complex. This Potorous longipes (Long-footed potoroo) protein is Sperm protamine P1 (PRM1).